A 369-amino-acid chain; its full sequence is 3-isopropylmalate dehydrogenase (369 aa).

NAD(+) is bound at residue 77–90; the sequence is GPKYDVLDFSVKPE. Arg97, Arg107, Arg135, and Asp226 together coordinate substrate. Positions 226, 250, and 254 each coordinate Mg(2+). 289 to 301 is an NAD(+) binding site; it reads GSAPDIAGQGKAN.

It belongs to the isocitrate and isopropylmalate dehydrogenases family. LeuB type 1 subfamily. Homodimer. It depends on Mg(2+) as a cofactor. Mn(2+) is required as a cofactor.

It is found in the cytoplasm. The catalysed reaction is (2R,3S)-3-isopropylmalate + NAD(+) = 4-methyl-2-oxopentanoate + CO2 + NADH. It participates in amino-acid biosynthesis; L-leucine biosynthesis; L-leucine from 3-methyl-2-oxobutanoate: step 3/4. In terms of biological role, catalyzes the oxidation of 3-carboxy-2-hydroxy-4-methylpentanoate (3-isopropylmalate) to 3-carboxy-4-methyl-2-oxopentanoate. The product decarboxylates to 4-methyl-2 oxopentanoate. This Cereibacter sphaeroides (strain ATCC 17023 / DSM 158 / JCM 6121 / CCUG 31486 / LMG 2827 / NBRC 12203 / NCIMB 8253 / ATH 2.4.1.) (Rhodobacter sphaeroides) protein is 3-isopropylmalate dehydrogenase.